A 491-amino-acid polypeptide reads, in one-letter code: Cytochrome P450 2C40 (491 aa).

Residues 1–25 (MDPFVVLVLCLSFLLVLSLWRQRSA) form the signal peptide. C435 contributes to the heme binding site.

It belongs to the cytochrome P450 family. Requires heme as cofactor. Liver, brain, kidney, and intestine, with trace amounts in lung and heart. Expressed throughout the intestinal tract, with higher expression levels in jejunum, cecum and colon.

The protein localises to the endoplasmic reticulum membrane. It localises to the microsome membrane. The catalysed reaction is (5Z,8Z,11Z,14Z)-eicosatetraenoate + reduced [NADPH--hemoprotein reductase] + O2 = 16(R)-hydroxy-(5Z,8Z,11Z,14Z)-eicosatetraenoate + oxidized [NADPH--hemoprotein reductase] + H2O + H(+). It catalyses the reaction (5Z,8Z,11Z,14Z)-eicosatetraenoate + reduced [NADPH--hemoprotein reductase] + O2 = 16(S)-hydroxy-(5Z,8Z,11Z,14Z)-eicosatetraenoate + oxidized [NADPH--hemoprotein reductase] + H2O + H(+). The enzyme catalyses (5Z,8Z,11Z,14Z)-eicosatetraenoate + reduced [NADPH--hemoprotein reductase] + O2 = (14R,15S)-epoxy-(5Z,8Z,11Z)-eicosatrienoate + oxidized [NADPH--hemoprotein reductase] + H2O + H(+). It carries out the reaction (5Z,8Z,11Z,14Z)-eicosatetraenoate + reduced [NADPH--hemoprotein reductase] + O2 = (14S,15R)-epoxy-(5Z,8Z,11Z)-eicosatrienoate + oxidized [NADPH--hemoprotein reductase] + H2O + H(+). Its pathway is lipid metabolism; arachidonate metabolism. In terms of biological role, a cytochrome P450 monooxygenase that may play a major role in the metabolism of arachidonic acid in the intestinal tract. Exhibits regioselective hydroxylase and epoxidase activity toward arachidonic acid, producing 16(R)-hydroxyeicosatetraenoic acid (HETE) and (14R,15S)-epoxyeicosatrienoic acid (EpETrE) as major products. Mechanistically, uses molecular oxygen inserting one oxygen atom into a substrate, and reducing the second into a water molecule, with two electrons provided by NADPH via cytochrome P450 reductase (CPR; NADPH-ferrihemoprotein reductase). In Mus musculus (Mouse), this protein is Cytochrome P450 2C40.